The chain runs to 318 residues: NADH-ubiquinone oxidoreductase chain 1 (318 aa).

8 helical membrane passes run 2–22 (FLTN…FLTL), 70–90 (MFLM…IPLP), 102–122 (LLFM…SGWA), 147–167 (AIIL…TLII), 171–191 (YMWL…STLA), 222–242 (LFFL…TILF), 253–273 (ELYT…FLWI), and 294–314 (LPLT…TAAI).

This sequence belongs to the complex I subunit 1 family.

It localises to the mitochondrion inner membrane. The catalysed reaction is a ubiquinone + NADH + 5 H(+)(in) = a ubiquinol + NAD(+) + 4 H(+)(out). Functionally, core subunit of the mitochondrial membrane respiratory chain NADH dehydrogenase (Complex I) that is believed to belong to the minimal assembly required for catalysis. Complex I functions in the transfer of electrons from NADH to the respiratory chain. The immediate electron acceptor for the enzyme is believed to be ubiquinone. This Diaemus youngi (White-winged vampire bat) protein is NADH-ubiquinone oxidoreductase chain 1 (MT-ND1).